Consider the following 673-residue polypeptide: UvrABC system protein B (673 aa).

Positions 26–183 (ANFEAGLAKQ…RHLTDLQYTR (158 aa)) constitute a Helicase ATP-binding domain. 39–46 (GVTGSGKT) contributes to the ATP binding site. The Beta-hairpin signature appears at 92–115 (YYDYYQPEAYVPSSDTFIEKDSSI). Positions 431-597 (QVDDLMSEIH…SVERPISDIM (167 aa)) constitute a Helicase C-terminal domain. Residues 601 to 631 (REDAAEKKSGKGRSKSRQVAEETPDYRAMKP) form a disordered region. Positions 618 to 630 (QVAEETPDYRAMK) are enriched in basic and acidic residues. The 36-residue stretch at 635-670 (AGKLKSLEQKMYQHAKDLEFEAAAQIRDQIQKLKTA) folds into the UVR domain.

This sequence belongs to the UvrB family. Forms a heterotetramer with UvrA during the search for lesions. Interacts with UvrC in an incision complex.

It localises to the cytoplasm. Its function is as follows. The UvrABC repair system catalyzes the recognition and processing of DNA lesions. A damage recognition complex composed of 2 UvrA and 2 UvrB subunits scans DNA for abnormalities. Upon binding of the UvrA(2)B(2) complex to a putative damaged site, the DNA wraps around one UvrB monomer. DNA wrap is dependent on ATP binding by UvrB and probably causes local melting of the DNA helix, facilitating insertion of UvrB beta-hairpin between the DNA strands. Then UvrB probes one DNA strand for the presence of a lesion. If a lesion is found the UvrA subunits dissociate and the UvrB-DNA preincision complex is formed. This complex is subsequently bound by UvrC and the second UvrB is released. If no lesion is found, the DNA wraps around the other UvrB subunit that will check the other stand for damage. The sequence is that of UvrABC system protein B from Xanthomonas oryzae pv. oryzae (strain MAFF 311018).